Reading from the N-terminus, the 347-residue chain is NADH-ubiquinone oxidoreductase chain 2 (347 aa).

A run of 11 helical transmembrane segments spans residues Met1 to Ala21, His25 to Thr45, Ala55 to Leu75, Leu96 to Pro116, Thr123 to Tyr143, Ile145 to Gly165, Ile178 to Pro198, Asn199 to Leu219, Leu237 to Leu257, Gly274 to Met294, and Leu324 to Phe344.

The protein belongs to the complex I subunit 2 family. As to quaternary structure, core subunit of respiratory chain NADH dehydrogenase (Complex I) which is composed of 45 different subunits. Interacts with TMEM242.

Its subcellular location is the mitochondrion inner membrane. It catalyses the reaction a ubiquinone + NADH + 5 H(+)(in) = a ubiquinol + NAD(+) + 4 H(+)(out). In terms of biological role, core subunit of the mitochondrial membrane respiratory chain NADH dehydrogenase (Complex I) which catalyzes electron transfer from NADH through the respiratory chain, using ubiquinone as an electron acceptor. Essential for the catalytic activity and assembly of complex I. This is NADH-ubiquinone oxidoreductase chain 2 from Symphalangus syndactylus (Siamang).